The primary structure comprises 612 residues: Glutamine--fructose-6-phosphate aminotransferase [isomerizing] (612 aa).

Cys-2 acts as the Nucleophile; for GATase activity in catalysis. Positions 2–217 constitute a Glutamine amidotransferase type-2 domain; the sequence is CGIVGGVAER…EGDIARLTRD (216 aa). 2 SIS domains span residues 283 to 428 and 461 to 602; these read AEAD…VKEQ and LSEL…VDQP. Catalysis depends on Lys-607, which acts as the For Fru-6P isomerization activity.

As to quaternary structure, homodimer.

It is found in the cytoplasm. The catalysed reaction is D-fructose 6-phosphate + L-glutamine = D-glucosamine 6-phosphate + L-glutamate. Its function is as follows. Catalyzes the first step in hexosamine metabolism, converting fructose-6P into glucosamine-6P using glutamine as a nitrogen source. In Acinetobacter baylyi (strain ATCC 33305 / BD413 / ADP1), this protein is Glutamine--fructose-6-phosphate aminotransferase [isomerizing].